Consider the following 376-residue polypeptide: Queuine tRNA-ribosyltransferase (376 aa).

The Proton acceptor role is filled by Asp-93. Substrate contacts are provided by residues Asp-93–Phe-97, Asp-147, Gln-190, and Gly-217. The segment at Gly-248–Asp-254 is RNA binding. Asp-267 functions as the Nucleophile in the catalytic mechanism. The tract at residues Thr-272–Arg-276 is RNA binding; important for wobble base 34 recognition.

The protein belongs to the queuine tRNA-ribosyltransferase family. In terms of assembly, homodimer. Within each dimer, one monomer is responsible for RNA recognition and catalysis, while the other monomer binds to the replacement base PreQ1.

It catalyses the reaction 7-aminomethyl-7-carbaguanine + guanosine(34) in tRNA = 7-aminomethyl-7-carbaguanosine(34) in tRNA + guanine. It functions in the pathway tRNA modification; tRNA-queuosine biosynthesis. In terms of biological role, catalyzes the base-exchange of a guanine (G) residue with the queuine precursor 7-aminomethyl-7-deazaguanine (PreQ1) at position 34 (anticodon wobble position) in tRNAs with GU(N) anticodons (tRNA-Asp, -Asn, -His and -Tyr). Catalysis occurs through a double-displacement mechanism. The nucleophile active site attacks the C1' of nucleotide 34 to detach the guanine base from the RNA, forming a covalent enzyme-RNA intermediate. The proton acceptor active site deprotonates the incoming PreQ1, allowing a nucleophilic attack on the C1' of the ribose to form the product. After dissociation, two additional enzymatic reactions on the tRNA convert PreQ1 to queuine (Q), resulting in the hypermodified nucleoside queuosine (7-(((4,5-cis-dihydroxy-2-cyclopenten-1-yl)amino)methyl)-7-deazaguanosine). This is Queuine tRNA-ribosyltransferase from Rhizobium meliloti (strain 1021) (Ensifer meliloti).